We begin with the raw amino-acid sequence, 61 residues long: MRECISIHIGQAGIQVGNACWELYCLEHGIQADGQMPGDKTIGGGDAEFDEGEDGDEGDEY.

A GTP-binding site is contributed by Gln11. The disordered stretch occupies residues 35–61 (QMPGDKTIGGGDAEFDEGEDGDEGDEY). Lys40 carries the post-translational modification N6-acetyllysine. A compositionally biased stretch (acidic residues) spans 47–61 (AEFDEGEDGDEGDEY).

This sequence belongs to the tubulin family. Dimer of alpha and beta chains. A typical microtubule is a hollow water-filled tube with an outer diameter of 25 nm and an inner diameter of 15 nM. Alpha-beta heterodimers associate head-to-tail to form protofilaments running lengthwise along the microtubule wall with the beta-tubulin subunit facing the microtubule plus end conferring a structural polarity. Microtubules usually have 13 protofilaments but different protofilament numbers can be found in some organisms and specialized cells. The cofactor is Mg(2+). In terms of processing, undergoes a tyrosination/detyrosination cycle, the cyclic removal and re-addition of a C-terminal tyrosine residue by the enzymes tubulin tyrosine carboxypeptidase (TTCP) and tubulin tyrosine ligase (TTL), respectively. Post-translationally, acetylation of alpha chains at Lys-40 stabilizes microtubules and affects affinity and processivity of microtubule motors. This modification has a role in multiple cellular functions, ranging from cell motility, cell cycle progression or cell differentiation to intracellular trafficking and signaling.

The protein localises to the cytoplasm. It is found in the cytoskeleton. It carries out the reaction GTP + H2O = GDP + phosphate + H(+). Functionally, tubulin is the major constituent of microtubules, a cylinder consisting of laterally associated linear protofilaments composed of alpha- and beta-tubulin heterodimers. Microtubules grow by the addition of GTP-tubulin dimers to the microtubule end, where a stabilizing cap forms. Below the cap, tubulin dimers are in GDP-bound state, owing to GTPase activity of alpha-tubulin. The polypeptide is Tubulin alpha-4 chain (TUBA4) (Zea mays (Maize)).